Reading from the N-terminus, the 142-residue chain is Large ribosomal subunit protein uL11 (142 aa).

The protein belongs to the universal ribosomal protein uL11 family. In terms of assembly, part of the ribosomal stalk of the 50S ribosomal subunit. Interacts with L10 and the large rRNA to form the base of the stalk. L10 forms an elongated spine to which L12 dimers bind in a sequential fashion forming a multimeric L10(L12)X complex. Post-translationally, one or more lysine residues are methylated.

Its function is as follows. Forms part of the ribosomal stalk which helps the ribosome interact with GTP-bound translation factors. This is Large ribosomal subunit protein uL11 from Buchnera aphidicola subsp. Acyrthosiphon pisum (strain APS) (Acyrthosiphon pisum symbiotic bacterium).